The following is a 497-amino-acid chain: Serine hydroxymethyltransferase, mitochondrial (497 aa).

Residues 1 to 27 constitute a mitochondrion transit peptide; the sequence is MFIRRLHTSSRRLTCGEALRACQQTGA. At lysine 272 the chain carries N6-(pyridoxal phosphate)lysine.

It belongs to the SHMT family. As to quaternary structure, homotetramer. The cofactor is pyridoxal 5'-phosphate.

Its subcellular location is the mitochondrion. It carries out the reaction (6R)-5,10-methylene-5,6,7,8-tetrahydrofolate + glycine + H2O = (6S)-5,6,7,8-tetrahydrofolate + L-serine. It participates in one-carbon metabolism; tetrahydrofolate interconversion. In terms of biological role, interconversion of serine and glycine. In Eremothecium gossypii (strain ATCC 10895 / CBS 109.51 / FGSC 9923 / NRRL Y-1056) (Yeast), this protein is Serine hydroxymethyltransferase, mitochondrial (SHM1).